Consider the following 379-residue polypeptide: Homoserine O-succinyltransferase (379 aa).

The 310-residue stretch at 51–360 (NAVLICHALS…DAPQGHDAFL (310 aa)) folds into the AB hydrolase-1 domain. Serine 157 acts as the Nucleophile in catalysis. Residue arginine 227 coordinates substrate. Active-site residues include aspartate 323 and histidine 356. Aspartate 357 provides a ligand contact to substrate.

This sequence belongs to the AB hydrolase superfamily. MetX family. As to quaternary structure, homodimer.

The protein localises to the cytoplasm. It carries out the reaction L-homoserine + succinyl-CoA = O-succinyl-L-homoserine + CoA. Its pathway is amino-acid biosynthesis; L-methionine biosynthesis via de novo pathway; O-succinyl-L-homoserine from L-homoserine: step 1/1. Its function is as follows. Transfers a succinyl group from succinyl-CoA to L-homoserine, forming succinyl-L-homoserine. This is Homoserine O-succinyltransferase from Pseudomonas aeruginosa (strain UCBPP-PA14).